Reading from the N-terminus, the 596-residue chain is Arrestin domain-containing protein C31A2.12 (596 aa).

The chain crosses the membrane as a helical span at residues 194–211 (AYAIGSYIPIHFVLVPLL). Disordered regions lie at residues 363–387 (NLDT…TYAS) and 405–446 (QQQP…VITR). Phosphothreonine is present on residues threonine 373 and threonine 374. Polar residues-rich tracts occupy residues 405–420 (QQQP…SPSN) and 430–446 (SLGS…VITR). Phosphoserine is present on residues serine 452, serine 474, serine 493, and serine 497. The segment at 493 to 596 (SRPPSPGIVT…MLPSGFSRRN (104 aa)) is disordered. A phosphothreonine mark is found at threonine 502 and threonine 507. The span at 504-522 (PQRTSPSFFVSPTESTRQS) shows a compositional bias: polar residues. A Phosphoserine modification is found at serine 514. The segment covering 531 to 555 (HSTSSSSGISPSHSSASLAHLSQAS) has biased composition (low complexity).

It belongs to the arrestin family.

It localises to the membrane. This Schizosaccharomyces pombe (strain 972 / ATCC 24843) (Fission yeast) protein is Arrestin domain-containing protein C31A2.12.